The primary structure comprises 99 residues: Acylphosphatase-2 (99 aa).

S2 carries the post-translational modification N-acetylserine. The region spanning 9-99 (SVDYEVFGRV…LEYSNFSIRY (91 aa)) is the Acylphosphatase-like domain. Catalysis depends on residues R24 and N42. Residue S93 is modified to Phosphoserine.

Belongs to the acylphosphatase family.

The catalysed reaction is an acyl phosphate + H2O = a carboxylate + phosphate + H(+). In terms of biological role, its physiological role is not yet clear. This is Acylphosphatase-2 (ACYP2) from Cavia porcellus (Guinea pig).